The following is a 548-amino-acid chain: Membrane protein insertase YidC (548 aa).

Residues 6–26 (NLLVIALLFVSFMIWQAWEQD) form a helical membrane-spanning segment. The segment at 28–55 (NPQPQAQQTTQTTTTAAGSAADQGVPAS) is disordered. Low complexity predominate over residues 30–50 (QPQAQQTTQTTTTAAGSAADQ). The next 4 helical transmembrane spans lie at 350–370 (FVGN…GIMY), 420–440 (LGGC…YYML), 458–478 (LSAQ…MFFI), and 499–519 (PVIF…YYIV).

It belongs to the OXA1/ALB3/YidC family. Type 1 subfamily. In terms of assembly, interacts with the Sec translocase complex via SecD. Specifically interacts with transmembrane segments of nascent integral membrane proteins during membrane integration.

It localises to the cell inner membrane. Its function is as follows. Required for the insertion and/or proper folding and/or complex formation of integral membrane proteins into the membrane. Involved in integration of membrane proteins that insert both dependently and independently of the Sec translocase complex, as well as at least some lipoproteins. Aids folding of multispanning membrane proteins. This chain is Membrane protein insertase YidC, found in Shigella dysenteriae serotype 1 (strain Sd197).